The primary structure comprises 320 residues: Cytochrome f (320 aa).

An N-terminal signal peptide occupies residues 1–35; the sequence is MQTRNAFSWLKKQITRSISVSLMIYILTRTSISSA. Heme is bound by residues Tyr36, Cys56, Cys59, and His60. The helical transmembrane segment at 286 to 305 threads the bilayer; the sequence is VQGLLFFLASVILAQIFLVL.

It belongs to the cytochrome f family. The 4 large subunits of the cytochrome b6-f complex are cytochrome b6, subunit IV (17 kDa polypeptide, petD), cytochrome f and the Rieske protein, while the 4 small subunits are PetG, PetL, PetM and PetN. The complex functions as a dimer. It depends on heme as a cofactor.

It is found in the plastid. The protein localises to the chloroplast thylakoid membrane. Its function is as follows. Component of the cytochrome b6-f complex, which mediates electron transfer between photosystem II (PSII) and photosystem I (PSI), cyclic electron flow around PSI, and state transitions. The polypeptide is Cytochrome f (Atropa belladonna (Belladonna)).